The following is a 411-amino-acid chain: Gamma-glutamyl phosphate reductase (411 aa).

The protein belongs to the gamma-glutamyl phosphate reductase family.

The protein resides in the cytoplasm. It carries out the reaction L-glutamate 5-semialdehyde + phosphate + NADP(+) = L-glutamyl 5-phosphate + NADPH + H(+). Its pathway is amino-acid biosynthesis; L-proline biosynthesis; L-glutamate 5-semialdehyde from L-glutamate: step 2/2. Its function is as follows. Catalyzes the NADPH-dependent reduction of L-glutamate 5-phosphate into L-glutamate 5-semialdehyde and phosphate. The product spontaneously undergoes cyclization to form 1-pyrroline-5-carboxylate. The sequence is that of Gamma-glutamyl phosphate reductase from Nautilia profundicola (strain ATCC BAA-1463 / DSM 18972 / AmH).